Here is a 423-residue protein sequence, read N- to C-terminus: Putative competence-damage inducible protein (423 aa).

This sequence belongs to the CinA family.

This Streptococcus equi subsp. equi (strain 4047) protein is Putative competence-damage inducible protein.